We begin with the raw amino-acid sequence, 346 residues long: E3 ubiquitin-protein ligase ARK2C (346 aa).

Disordered regions lie at residues 23-76 and 267-288; these read PFQR…QHSG and PHKY…GEES. The ubiquitin binding stretch occupies residues 266-268; it reads FPH. Residues 275–284 show a composition bias toward basic and acidic residues; that stretch reads PQDGKGKKDE. Zn(2+)-binding residues include Cys294 and Cys297. An RING-type; atypical zinc finger spans residues 294 to 335; the sequence is CTICLSMLEDGEDVRRLPCMHLFHQLCVDQWLAMSKKCPICR. A ubiquitin binding region spans residues 309 to 313; the sequence is RLPCM. Residues His317 and Cys320 each coordinate Zn(2+).

This sequence belongs to the Arkadia family. As to quaternary structure, monomer; binding to the ubiquitin-conjugating enzyme E2 does not trigger homodimerization.

The protein localises to the nucleus. It carries out the reaction S-ubiquitinyl-[E2 ubiquitin-conjugating enzyme]-L-cysteine + [acceptor protein]-L-lysine = [E2 ubiquitin-conjugating enzyme]-L-cysteine + N(6)-ubiquitinyl-[acceptor protein]-L-lysine.. Binds free ubiquitin non-covalently via its RING-type zinc finger. Ubiquitin-binding leads to enhance the E3 ubiquitin-protein ligase activity by stabilizing the ubiquitin-conjugating enzyme E2 (donor ubiquitin) in the 'closed' conformation and activating ubiquitin transfer. E3 ubiquitin-protein ligase that acts as a regulator of motor axon elongation. Required for efficient motor axon extension in the dorsal forelimb by enhancing the transcriptional responses of the SMAD1/SMAD5/SMAD8 effectors, which are activated downstream of BMP. Acts by mediating ubiquitination and degradation of SMAD inhibitors such as SMAD6, SMAD7, SKI and SNON isoform of SKIL. The protein is E3 ubiquitin-protein ligase ARK2C of Homo sapiens (Human).